The chain runs to 88 residues: uncharacterized protein (88 aa).

This sequence belongs to the phD/YefM antitoxin family.

This is an uncharacterized protein from Sinorhizobium fredii (strain NBRC 101917 / NGR234).